We begin with the raw amino-acid sequence, 75 residues long: Putative membrane protein insertion efficiency factor (75 aa).

This sequence belongs to the UPF0161 family.

It localises to the cell membrane. Its function is as follows. Could be involved in insertion of integral membrane proteins into the membrane. In Halalkalibacterium halodurans (strain ATCC BAA-125 / DSM 18197 / FERM 7344 / JCM 9153 / C-125) (Bacillus halodurans), this protein is Putative membrane protein insertion efficiency factor.